We begin with the raw amino-acid sequence, 884 residues long: MNCNEHESTKLNYLNSLEKSRDVKTDISDKPKYFITFPYPYMNGKLHLGHLYSISKADFMSYYKELQGFNVLFPLAFHCTGMPIAALAKKLGEELEGKKTDISTKEIIQNLGFNDVMPFTDPVHWIKTFPKLCISSLKTFGANIDWRRSFVTTDINKYYDSFVRWQFFNLKELGYLSFGKRHSIYCPLDKQMCLDHDRRKGENIKPVRQIMFKFHLHDKILLVRQNSIGKPYKLVCGKSLEVVSFKYNNTSFLAEKIIFDNLKYQINNVKYKESLVLSMDLKDGLTYDGTNIEVEVIEKNILVVKTDTKSDVELYEKEIKALNEIEETLFTLSTSSEGIVESVAKLSVENTKDLLVQTKHFISVYIPEKEVISRSGGICVVSLLDQWYIDYSNEKWKSKVKKCLDNLECGPDTRSMLYAGIDWVNKWGFSRSFGLGTKIPWDTQYLIDSLSDSTIYMAFYTVKHLLFEDLEGKLEIFPSNKLSNDVWDYIFAGKDLVPELYGYLDLLEKCRNNFQYFYPVDLRVSGKDLIKNHLLFFMFNHVALFDEKYWPKRIFTNGHLMLNKEKMSKSTGNFLSVDDALLKYGKSATRMCLAVCGDTNDDANFVEDNANLFILKIYTFVKEIQKLNELVRKKSENETIASYSNADVLLLETVSVNVTEALNAYNSMKYSDVVKFSFFEMVNLINLYNNINGTNILLKNLVYKSATQLLYPIMPDLCRTLIEKYFDSEFNLPEPKLKTNKMISAFEYISELIKKIAASKQAKNNSCVKIAVGKNYSEWKKEIFELIDKIDCPRNNEIKKNKVFIASLLDSVKPILQKSKINITKGNNFVMDYLVNPDKFVMKFNEYEIINEFKFYIENMSNKKAILEEHCDAEPLNPIITFSK.

A 'HIGH' region motif is present at residues 40 to 50; it reads PYMNGKLHLGH. Positions 566–570 match the 'KMSKS' region motif; the sequence is KMSKS. An ATP-binding site is contributed by Lys569.

Belongs to the class-I aminoacyl-tRNA synthetase family.

The protein localises to the cytoplasm. It carries out the reaction tRNA(Leu) + L-leucine + ATP = L-leucyl-tRNA(Leu) + AMP + diphosphate. This is Probable leucine--tRNA ligase, cytoplasmic from Vairimorpha ceranae (strain BRL01) (Microsporidian parasite).